A 227-amino-acid chain; its full sequence is PKHD-type hydroxylase ACIAD0531 (227 aa).

Residues 78 to 178 form the Fe2OG dioxygenase domain; that stretch reads HIIPPLFNRY…RFASFFWVQS (101 aa). Positions 96, 98, and 159 each coordinate Fe cation. Residue R169 coordinates 2-oxoglutarate.

The cofactor is Fe(2+). L-ascorbate serves as cofactor.

This Acinetobacter baylyi (strain ATCC 33305 / BD413 / ADP1) protein is PKHD-type hydroxylase ACIAD0531.